The sequence spans 175 residues: ATP-dependent protease subunit HslV (175 aa).

The active site involves threonine 2. Alanine 156, cysteine 159, and threonine 162 together coordinate Na(+).

It belongs to the peptidase T1B family. HslV subfamily. In terms of assembly, a double ring-shaped homohexamer of HslV is capped on each side by a ring-shaped HslU homohexamer. The assembly of the HslU/HslV complex is dependent on binding of ATP.

It localises to the cytoplasm. It carries out the reaction ATP-dependent cleavage of peptide bonds with broad specificity.. With respect to regulation, allosterically activated by HslU binding. In terms of biological role, protease subunit of a proteasome-like degradation complex believed to be a general protein degrading machinery. The protein is ATP-dependent protease subunit HslV of Rhizobium etli (strain ATCC 51251 / DSM 11541 / JCM 21823 / NBRC 15573 / CFN 42).